Reading from the N-terminus, the 232-residue chain is Ribonuclease 3 (232 aa).

Residues 7 to 136 (AALLEDTIDY…LLGAVFCDGG (130 aa)) form the RNase III domain. Residue glutamate 49 coordinates Mg(2+). Residue aspartate 53 is part of the active site. 2 residues coordinate Mg(2+): asparagine 122 and glutamate 125. Glutamate 125 is a catalytic residue. The DRBM domain occupies 163 to 232 (DYKTRLQERL…AKQALEYLEE (70 aa)).

The protein belongs to the ribonuclease III family. In terms of assembly, homodimer. The cofactor is Mg(2+).

The protein resides in the cytoplasm. The enzyme catalyses Endonucleolytic cleavage to 5'-phosphomonoester.. Its function is as follows. Digests double-stranded RNA. Involved in the processing of primary rRNA transcript to yield the immediate precursors to the large and small rRNAs (23S and 16S). Processes some mRNAs, and tRNAs when they are encoded in the rRNA operon. Processes pre-crRNA and tracrRNA of type II CRISPR loci if present in the organism. The sequence is that of Ribonuclease 3 from Syntrophotalea carbinolica (strain DSM 2380 / NBRC 103641 / GraBd1) (Pelobacter carbinolicus).